The sequence spans 176 residues: V-type proton ATPase 16 kDa proteolipid subunit (176 aa).

At 1-17 (MSVLLRSVTELCPVYSP) the chain is on the lumenal side. Residues 18-38 (FFGSMGITASIVFTVFGGAYG) form a helical membrane-spanning segment. The Cytoplasmic segment spans residues 39 to 62 (TAKSSVGISSVGVMKPEFIMRSLF). A helical transmembrane segment spans residues 63–83 (PVVFAGVIGLYGLIVCIVLFI). At 84–98 (NVNKSEYSLNRAFLD) the chain is on the lumenal side. The helical transmembrane segment at 99–119 (LGAGLTCGLCGLASGMSIGIS) threads the bilayer. Residues 120–136 (GDCGVRGAAQQPKLFVS) lie on the Cytoplasmic side of the membrane. Residues 137-157 (MLICLIFSEALALYGFIVALI) traverse the membrane as a helical segment. The Lumenal portion of the chain corresponds to 158-176 (MAATGDNSCVATASTSSSS).

The protein belongs to the V-ATPase proteolipid subunit family. V-ATPase is a heteromultimeric enzyme composed of a peripheral catalytic V1 complex (main components: subunits A, B, C, D, E, and F) attached to an integral membrane V0 proton pore complex (main component: the proteolipid protein; which is present as a hexamer that forms the proton-conducting pore).

The protein resides in the vacuole membrane. In terms of biological role, proton-conducting pore forming subunit of the membrane integral V0 complex of vacuolar ATPase. V-ATPase is responsible for acidifying a variety of intracellular compartments in eukaryotic cells. The polypeptide is V-type proton ATPase 16 kDa proteolipid subunit (VMA3) (Entamoeba dispar).